Here is a 703-residue protein sequence, read N- to C-terminus: Epidermal growth factor receptor (703 aa).

Residues 1-30 (MGVRSPLSASGPRGAAVLVLLLLGVALCSA) form the signal peptide. The Extracellular segment spans residues 31–654 (VEEKKVCQGT…GCPNGSKTPS (624 aa)). A disulfide bridge links Cys-37 with Cys-64. Residues Asn-134, Asn-190, and Asn-200 are each glycosylated (N-linked (GlcNAc...) asparagine). 13 disulfide bridges follow: Cys-164/Cys-194, Cys-197/Cys-206, Cys-201/Cys-214, Cys-222/Cys-230, Cys-226/Cys-238, Cys-239/Cys-247, Cys-243/Cys-255, Cys-258/Cys-267, Cys-271/Cys-298, Cys-302/Cys-314, Cys-318/Cys-333, Cys-336/Cys-340, and Cys-344/Cys-369. Residues Asn-359, Asn-368, and Asn-420 are each glycosylated (N-linked (GlcNAc...) asparagine). Cystine bridges form between Cys-477-Cys-506, Cys-513-Cys-522, Cys-517-Cys-530, Cys-533-Cys-542, Cys-546-Cys-562, Cys-565-Cys-581, Cys-569-Cys-589, Cys-592-Cys-601, Cys-605-Cys-627, Cys-630-Cys-638, and Cys-634-Cys-646. 2 N-linked (GlcNAc...) asparagine glycosylation sites follow: Asn-573 and Asn-578. N-linked (GlcNAc...) asparagine glycans are attached at residues Asn-613 and Asn-633. N-linked (GlcNAc...) asparagine glycosylation is present at Asn-648. A helical membrane pass occupies residues 655-667 (IAAGVVGGLLCLV). Topologically, residues 668 to 703 (VVGLGIGLYLRRRHIVRKRTLRRLLQERELVEPLTP) are cytoplasmic. Phosphothreonine occurs at positions 687 and 702.

The protein belongs to the protein kinase superfamily. Tyr protein kinase family. EGF receptor subfamily. Binding of the ligand triggers homo- and/or heterodimerization of the receptor triggering its autophosphorylation. In terms of processing, phosphorylated. Autophosphorylates.

It is found in the cell membrane. Its subcellular location is the endoplasmic reticulum membrane. It localises to the golgi apparatus membrane. The protein resides in the nucleus membrane. The protein localises to the endosome. It is found in the endosome membrane. Its subcellular location is the nucleus. It carries out the reaction L-tyrosyl-[protein] + ATP = O-phospho-L-tyrosyl-[protein] + ADP + H(+). Its activity is regulated as follows. Endocytosis and inhibition of the activated EGFR by phosphatases constitute immediate regulatory mechanisms. Moreover, inducible feedback inhibitors may constitute alternative regulatory mechanisms for the EGFR signaling. Its function is as follows. Receptor tyrosine kinase binding ligands of the EGF family and activating several signaling cascades to convert extracellular cues into appropriate cellular responses. Known ligands include EGF and TGFA/TGF-alpha. Ligand binding triggers receptor homo- and/or heterodimerization and autophosphorylation on key cytoplasmic residues. The phosphorylated receptor recruits adapter proteins like GRB2 which in turn activates complex downstream signaling cascades. Activates at least 4 major downstream signaling cascades including the RAS-RAF-MEK-ERK, PI3 kinase-AKT, PLCgamma-PKC and STATs modules. May also activate the NF-kappa-B signaling cascade. This chain is Epidermal growth factor receptor (EGFR), found in Gallus gallus (Chicken).